A 175-amino-acid chain; its full sequence is General odorant-binding protein 84a (175 aa).

The signal sequence occupies residues 1–24 (MYSALVRACAVIAFLILSPNCARA). 2 disulfide bridges follow: cysteine 103/cysteine 151 and cysteine 140/cysteine 160.

As to expression, present only in a small number of hairs scattered over the surface of the funiculus.

It is found in the secreted. The protein is General odorant-binding protein 84a (Obp84a) of Drosophila melanogaster (Fruit fly).